Here is a 161-residue protein sequence, read N- to C-terminus: MTTTPTTRNARQAKILEILDRTRVTSQVQLSELLLDEGIDITQATLSRDLDELGAKKVKRDGGRSFYVVGGELEQFEDQLNGPREKLRRMLDELVVSHDFSGNIAMLRTPAGAAQYLASFIDRVGLPDVVGCIAGDDTIFVLAREGLGGRELAEKLTSRGI.

Belongs to the ArgR family.

The protein localises to the cytoplasm. Its pathway is amino-acid biosynthesis; L-arginine biosynthesis [regulation]. Regulates arginine biosynthesis genes. This is Arginine repressor from Corynebacterium aurimucosum (strain ATCC 700975 / DSM 44827 / CIP 107346 / CN-1) (Corynebacterium nigricans).